A 1693-amino-acid chain; its full sequence is Latrophilin Cirl (1693 aa).

At 1-774 (MVLQGAKQRL…LFTMFDGNMR (774 aa)) the chain is on the extracellular side. An SUEL-type lectin domain is found at 30–119 (ACEGKKLTIE…KYLEAHYQCV (90 aa)). N-linked (GlcNAc...) asparagine glycans are attached at residues N147, N260, N306, and N345. The disordered stretch occupies residues 190–309 (PPATHATPPG…GPSVSSNGSA (120 aa)). 2 stretches are compositionally biased toward polar residues: residues 259-269 (SNATAPSNTRI) and 287-309 (KSSP…NGSA). The disordered stretch occupies residues 379-406 (SFDEDDEEMAGTSTTTPMSTSGDCLHNS). Low complexity predominate over residues 390–399 (TSTTTPMSTS). Residues N405, N662, N710, and N737 are each glycosylated (N-linked (GlcNAc...) asparagine). In terms of domain architecture, GAIN-B spans 568–761 (RSVVQKVKNI…AILMDVVDEH (194 aa)). Cystine bridges form between C716-C743 and C731-C745. A GPS region spans residues 716 to 761 (CVFWNYIDHAWSANGCSLESTNRTHSVCSCNHLTNFAILMDVVDEH). Residues 775 to 795 (IFIYISIAICVVFIVIALLTL) traverse the membrane as a helical segment. At 796–808 (KLFNGVFVKSART) the chain is on the cytoplasmic side. Residues 809–829 (SIYINIYICLLAIELLFLLGI) traverse the membrane as a helical segment. Over 830 to 835 (EQTETS) the chain is Extracellular. A helical membrane pass occupies residues 836–856 (IFCGFITVFLHCAILSGTSWF). Topologically, residues 857 to 882 (CYEAFHSYSTLTSDELLLEVDQTPKV) are cytoplasmic. The chain crosses the membrane as a helical span at residues 883 to 903 (NCYYLLSYGLSLSVVAISLVI). Over 904 to 927 (NPSTYTQNDYCVLMEANAVFYATF) the chain is Extracellular. The helical transmembrane segment at 928–948 (VAPVLIFFMAAIGYTFLSWII) threads the bilayer. Over 949–975 (MCRKSRTGLKTKEHTRLATVRFDIRCS) the chain is Cytoplasmic. Residues 976 to 996 (FVFFLLLSAVWCSAYFYLRGA) form a helical membrane-spanning segment. Residues 997–1003 (KMDEDVT) are Extracellular-facing. The helical transmembrane segment at 1004 to 1024 (GIYGYNFICFNTLLGLYIFVF) threads the bilayer. Topologically, residues 1025–1693 (HCIQNEKIRR…VRCYLEPLAK (669 aa)) are cytoplasmic. A disordered region spans residues 1089–1109 (PLGTNDDAHDEQQQQQHMSAT). Phosphoserine is present on residues S1165, S1256, and S1263. Disordered stretches follow at residues 1237 to 1264 (KPNS…LHSR), 1279 to 1362 (KTKP…APPP), 1450 to 1529 (SRYG…LPPQ), and 1596 to 1678 (SMRG…SAML). The segment covering 1307 to 1323 (QQQQQLRQQRQQQQQQL) has biased composition (low complexity). Phosphoserine is present on residues S1324 and S1325. Positions 1337 to 1357 (LHLQHQQQQQQQRRAGGQQQL) are enriched in low complexity. Over residues 1464–1475 (RNQQQQQHSLAQ) the composition is skewed to polar residues. Acidic residues-rich tracts occupy residues 1485 to 1498 (DEDD…EETT) and 1508 to 1521 (CDEE…DMED). A compositionally biased stretch (low complexity) spans 1640–1663 (QQLQKLSPQSTTSSSSHTSHSNPH).

Belongs to the G-protein coupled receptor 2 family. LN-TM7 subfamily. In terms of assembly, forms a heterodimer, consisting of a large extracellular region non-covalently linked to a seven-transmembrane moiety. Proteolytically cleaved into 2 subunits, an extracellular subunit and a seven-transmembrane subunit.

It localises to the cell membrane. This chain is Latrophilin Cirl, found in Drosophila pseudoobscura pseudoobscura (Fruit fly).